The primary structure comprises 81 residues: Neuronatin (81 aa).

The protein belongs to the neuronatin family.

Its function is as follows. May participate in the maintenance of segment identity in the hindbrain and pituitary development, and maturation or maintenance of the overall structure of the nervous system. May function as a regulatory subunit of ion channels. The chain is Neuronatin (NNAT) from Sus scrofa (Pig).